The primary structure comprises 291 residues: N-acetylmannosamine kinase (291 aa).

ATP is bound by residues 5–12 (AIDIGGTK) and 132–139 (GVGGGVVC). Residues H156, C166, C168, and C173 each coordinate Zn(2+).

The protein belongs to the ROK (NagC/XylR) family. NanK subfamily. In terms of assembly, homodimer.

The enzyme catalyses an N-acyl-D-mannosamine + ATP = an N-acyl-D-mannosamine 6-phosphate + ADP + H(+). It participates in amino-sugar metabolism; N-acetylneuraminate degradation; D-fructose 6-phosphate from N-acetylneuraminate: step 2/5. In terms of biological role, catalyzes the phosphorylation of N-acetylmannosamine (ManNAc) to ManNAc-6-P. The sequence is that of N-acetylmannosamine kinase from Salmonella typhi.